Consider the following 212-residue polypeptide: MPLNEIVGVVGNLISKGYIKKQSVIDALMSVPRHKFLPKNMEEYAYIDSPLGIGCGQTISAIHMVGIMCEELDLNMGQNVLEVGTGSGYQAAVVSKIVGESGKVTTVERIPELFEKSKQVLSELGYENVEAVLGDGTLGYLENSPYDRIYVTASGPNVPKALFEQLNDGGIILAPVGSHFQTLMRYKKTNGKIYEEKLLEVAFVPLIGENGF.

The active site involves Ser-60.

This sequence belongs to the methyltransferase superfamily. L-isoaspartyl/D-aspartyl protein methyltransferase family.

The protein localises to the cytoplasm. The enzyme catalyses [protein]-L-isoaspartate + S-adenosyl-L-methionine = [protein]-L-isoaspartate alpha-methyl ester + S-adenosyl-L-homocysteine. In terms of biological role, catalyzes the methyl esterification of L-isoaspartyl residues in peptides and proteins that result from spontaneous decomposition of normal L-aspartyl and L-asparaginyl residues. It plays a role in the repair and/or degradation of damaged proteins. The polypeptide is Protein-L-isoaspartate O-methyltransferase (Methanococcus maripaludis (strain C6 / ATCC BAA-1332)).